Here is a 179-residue protein sequence, read N- to C-terminus: MAKLHDYYKDEVVKKLMTEFNYNSVMQVPRVEKITLNMGVGEAIADKKLLDNAAADLTAISGQKPLITKARKSVAGFKIRQGYPIGCKVTLRGERMWEFFERLISIAVPRIRDFRGLSAKSFDGRGNYSMGVREQIIFPEIDYDKVDRVRGLDITITTTAKSDEEGRALLTAFNFPFRK.

It belongs to the universal ribosomal protein uL5 family. As to quaternary structure, part of the 50S ribosomal subunit; part of the 5S rRNA/L5/L18/L25 subcomplex. Contacts the 5S rRNA and the P site tRNA. Forms a bridge to the 30S subunit in the 70S ribosome.

Functionally, this is one of the proteins that bind and probably mediate the attachment of the 5S RNA into the large ribosomal subunit, where it forms part of the central protuberance. In the 70S ribosome it contacts protein S13 of the 30S subunit (bridge B1b), connecting the 2 subunits; this bridge is implicated in subunit movement. Contacts the P site tRNA; the 5S rRNA and some of its associated proteins might help stabilize positioning of ribosome-bound tRNAs. The polypeptide is Large ribosomal subunit protein uL5 (Edwardsiella ictaluri (strain 93-146)).